The primary structure comprises 157 residues: Small ribosomal subunit protein uS7 (157 aa).

This sequence belongs to the universal ribosomal protein uS7 family. Part of the 30S ribosomal subunit. Contacts proteins S9 and S11.

Functionally, one of the primary rRNA binding proteins, it binds directly to 16S rRNA where it nucleates assembly of the head domain of the 30S subunit. Is located at the subunit interface close to the decoding center, probably blocks exit of the E-site tRNA. The protein is Small ribosomal subunit protein uS7 of Leptospira interrogans serogroup Icterohaemorrhagiae serovar copenhageni (strain Fiocruz L1-130).